The chain runs to 338 residues: Ferrochelatase (338 aa).

Fe cation is bound by residues histidine 210 and glutamate 291.

This sequence belongs to the ferrochelatase family.

Its subcellular location is the cytoplasm. The enzyme catalyses heme b + 2 H(+) = protoporphyrin IX + Fe(2+). It participates in porphyrin-containing compound metabolism; protoheme biosynthesis; protoheme from protoporphyrin-IX: step 1/1. In terms of biological role, catalyzes the ferrous insertion into protoporphyrin IX. This is Ferrochelatase from Helicobacter acinonychis (strain Sheeba).